The sequence spans 908 residues: Probable RNA-directed DNA polymerase from transposon X-element (908 aa).

In terms of domain architecture, Reverse transcriptase spans 481-752 (AIVRLQYFPY…NAAKYLGVLL (272 aa)). Residues 883 to 908 (RPPRRLNRRQPRDLITRSPLTRVRRS) form a disordered region.

Mg(2+) serves as cofactor. Requires Mn(2+) as cofactor.

The enzyme catalyses DNA(n) + a 2'-deoxyribonucleoside 5'-triphosphate = DNA(n+1) + diphosphate. The sequence is that of Probable RNA-directed DNA polymerase from transposon X-element (X-element\ORF2) from Drosophila melanogaster (Fruit fly).